A 430-amino-acid polypeptide reads, in one-letter code: MTLMISTSVLDAENASRRDALTRDYESLGDRLARRGIDIDAVKAKVAAYGVAVPSWGVGTGGTRFARFPGPGEPRNIFDKLEDCAVIQQLTRATPAVSLHIPWDKVSDLGALKEKGSALGLSFDAMNSNTFSDAPGQAHSYKFGSLSHTDSATRRQAIEHNLECVEIGKALGSKALTVWVGDGSNFPGQSNFTRAFERYLDSMKAVYAALPDDWRIFTEHKMFEPAFYSTVVQDWGTNYLIAQELGPKAFCLVDLGHHAPNVNIEMIVARLIQFKKLGGFHFNDSKYGDDDLDTGSIDPYRLFLVFNELVDAETRAANGFDPAHMLDQSHNVTDPIESLMTSAMEVGRAYAQALIVDRKALAGYQEENDALMASETLKTAFRTDVEPILATARLENDGAIAPVAAYRASGYRARVAAERPAVAGGGGGIV.

3 residues coordinate Mn(2+): His-257, Asp-289, and Asp-291.

Belongs to the rhamnose isomerase family. Mn(2+) is required as a cofactor.

This is Probable sugar isomerase R00627 from Rhizobium meliloti (strain 1021) (Ensifer meliloti).